The sequence spans 208 residues: Small ribosomal subunit protein uS4 (208 aa).

Positions 30–49 (EKRPYAPGEHGRDRRRTESD) are disordered. The 67-residue stretch at 95-161 (TRLDNLVLRA…VPFQIAAEGV (67 aa)) folds into the S4 RNA-binding domain.

It belongs to the universal ribosomal protein uS4 family. As to quaternary structure, part of the 30S ribosomal subunit. Contacts protein S5. The interaction surface between S4 and S5 is involved in control of translational fidelity.

In terms of biological role, one of the primary rRNA binding proteins, it binds directly to 16S rRNA where it nucleates assembly of the body of the 30S subunit. With S5 and S12 plays an important role in translational accuracy. In Bifidobacterium longum (strain DJO10A), this protein is Small ribosomal subunit protein uS4.